We begin with the raw amino-acid sequence, 138 residues long: Small ribosomal subunit protein uS9 (138 aa).

It belongs to the universal ribosomal protein uS9 family.

This Sulfolobus acidocaldarius (strain ATCC 33909 / DSM 639 / JCM 8929 / NBRC 15157 / NCIMB 11770) protein is Small ribosomal subunit protein uS9 (rps9).